The sequence spans 244 residues: Small ribosomal subunit protein uS2 (244 aa).

It belongs to the universal ribosomal protein uS2 family.

This is Small ribosomal subunit protein uS2 from Psychromonas ingrahamii (strain DSM 17664 / CCUG 51855 / 37).